Reading from the N-terminus, the 595-residue chain is Probable carotenoid cleavage dioxygenase 4, chloroplastic (595 aa).

The transit peptide at 1 to 34 directs the protein to the chloroplast; the sequence is MDSVSSSSFLSSTFSLHHSLLRRRSSSPTLLRIN. Residues 41–74 form a disordered region; sequence RSPITNPSDNNDRRNKPKTLHNRTNHTLVSSPPK. The span at 55–64 shows a compositional bias: basic residues; it reads NKPKTLHNRT. Positions 287, 336, 404, and 583 each coordinate Fe cation.

The protein belongs to the carotenoid oxygenase family. As to quaternary structure, interacts with VAR3. Interacts with PGM48. Fe(2+) is required as a cofactor. In terms of tissue distribution, mostly expressed in flowers (e.g. sepals and petals), siliques, seeds, leaves and cotyledons.

The protein localises to the plastid. The protein resides in the chloroplast. It is found in the plastoglobule. May be involved in carotenoid cleavage. In Arabidopsis thaliana (Mouse-ear cress), this protein is Probable carotenoid cleavage dioxygenase 4, chloroplastic (CCD4).